The following is a 244-amino-acid chain: Large ribosomal subunit protein uL2 (244 aa).

Positions methionine 1–arginine 12 are enriched in basic residues. Disordered stretches follow at residues methionine 1–glycine 26 and alanine 193–phenylalanine 225.

It belongs to the universal ribosomal protein uL2 family. As to quaternary structure, part of the 50S ribosomal subunit. Forms a bridge to the 30S subunit in the 70S ribosome.

In terms of biological role, one of the primary rRNA binding proteins. Required for association of the 30S and 50S subunits to form the 70S ribosome, for tRNA binding and peptide bond formation. It has been suggested to have peptidyltransferase activity; this is somewhat controversial. Makes several contacts with the 16S rRNA in the 70S ribosome. This chain is Large ribosomal subunit protein uL2, found in Pyrobaculum calidifontis (strain DSM 21063 / JCM 11548 / VA1).